Reading from the N-terminus, the 364-residue chain is 4-hydroxythreonine-4-phosphate dehydrogenase (364 aa).

2 residues coordinate substrate: His148 and Thr149. Residues His177, His216, and His301 each coordinate a divalent metal cation. Substrate contacts are provided by Lys309, Asn318, and Arg327.

It belongs to the PdxA family. In terms of assembly, homodimer. Zn(2+) is required as a cofactor. Mg(2+) serves as cofactor. It depends on Co(2+) as a cofactor.

It is found in the cytoplasm. The catalysed reaction is 4-(phosphooxy)-L-threonine + NAD(+) = 3-amino-2-oxopropyl phosphate + CO2 + NADH. Its pathway is cofactor biosynthesis; pyridoxine 5'-phosphate biosynthesis; pyridoxine 5'-phosphate from D-erythrose 4-phosphate: step 4/5. Its function is as follows. Catalyzes the NAD(P)-dependent oxidation of 4-(phosphooxy)-L-threonine (HTP) into 2-amino-3-oxo-4-(phosphooxy)butyric acid which spontaneously decarboxylates to form 3-amino-2-oxopropyl phosphate (AHAP). This Campylobacter jejuni subsp. jejuni serotype O:23/36 (strain 81-176) protein is 4-hydroxythreonine-4-phosphate dehydrogenase.